The chain runs to 284 residues: Pantothenate synthetase (284 aa).

Methionine 31–histidine 38 contacts ATP. Catalysis depends on histidine 38, which acts as the Proton donor. Glutamine 62 is a (R)-pantoate binding site. Position 62 (glutamine 62) interacts with beta-alanine. Glycine 150–aspartate 153 lines the ATP pocket. Glutamine 156 contacts (R)-pantoate. Residues valine 179 and methionine 187 to arginine 190 contribute to the ATP site.

This sequence belongs to the pantothenate synthetase family. Homodimer.

The protein resides in the cytoplasm. The catalysed reaction is (R)-pantoate + beta-alanine + ATP = (R)-pantothenate + AMP + diphosphate + H(+). Its pathway is cofactor biosynthesis; (R)-pantothenate biosynthesis; (R)-pantothenate from (R)-pantoate and beta-alanine: step 1/1. Its function is as follows. Catalyzes the condensation of pantoate with beta-alanine in an ATP-dependent reaction via a pantoyl-adenylate intermediate. This chain is Pantothenate synthetase, found in Xanthomonas campestris pv. campestris (strain 8004).